A 347-amino-acid polypeptide reads, in one-letter code: NADH-quinone oxidoreductase subunit H (347 aa).

9 helical membrane-spanning segments follow: residues 13-33 (LIIALKSVVLLVVLLIVVAYL), 50-70 (PNVVGPWGLFQAFADLLKFVF), 82-102 (GVFLLAPFISAVLAMATWAVI), 115-135 (VGILYIFAISSLEVYGVIMGG), 161-181 (IGFVIVTVLLTVGSLNLTDIV), 198-218 (FLDWNWLCLFPMFVVFFISAL), 248-268 (FLLFFLGEYVAITLMCALMTV), 286-306 (VPGIIWFMLKLCFCFFLFAMV), and 325-345 (VFLPISLFMVVATATFLKVFG).

The protein belongs to the complex I subunit 1 family. As to quaternary structure, NDH-1 is composed of 14 different subunits. Subunits NuoA, H, J, K, L, M, N constitute the membrane sector of the complex.

Its subcellular location is the cell inner membrane. It catalyses the reaction a quinone + NADH + 5 H(+)(in) = a quinol + NAD(+) + 4 H(+)(out). Functionally, NDH-1 shuttles electrons from NADH, via FMN and iron-sulfur (Fe-S) centers, to quinones in the respiratory chain. The immediate electron acceptor for the enzyme in this species is believed to be ubiquinone. Couples the redox reaction to proton translocation (for every two electrons transferred, four hydrogen ions are translocated across the cytoplasmic membrane), and thus conserves the redox energy in a proton gradient. This subunit may bind ubiquinone. This Brucella abortus (strain 2308) protein is NADH-quinone oxidoreductase subunit H.